We begin with the raw amino-acid sequence, 141 residues long: Cholinesterase (141 aa).

Asparagine 39 carries N-linked (GlcNAc...) asparagine glycosylation. Position 49 to 50 (49 to 50) interacts with substrate; the sequence is GG. The active-site Acyl-ester intermediate is the serine 131. Position 131 is a phosphoserine (serine 131).

The protein belongs to the type-B carboxylesterase/lipase family. As to quaternary structure, homotetramer; disulfide-linked. Dimer of dimers. Present in most cells except erythrocytes.

Its subcellular location is the secreted. It carries out the reaction an acylcholine + H2O = a carboxylate + choline + H(+). In terms of biological role, esterase with broad substrate specificity. Contributes to the inactivation of the neurotransmitter acetylcholine. Can degrade neurotoxic organophosphate esters. The sequence is that of Cholinesterase (BCHE) from Macaca mulatta (Rhesus macaque).